A 415-amino-acid polypeptide reads, in one-letter code: Phosphoglycerate kinase (415 aa).

Residues 24–26, Arg43, 66–69, Arg125, and Arg165 contribute to the substrate site; these read DLN and HLGR. Residues Lys215, Gly303, Glu334, and 363–366 each bind ATP; that span reads GGDS.

The protein belongs to the phosphoglycerate kinase family. As to quaternary structure, monomer.

It localises to the cytoplasm. It carries out the reaction (2R)-3-phosphoglycerate + ATP = (2R)-3-phospho-glyceroyl phosphate + ADP. It participates in carbohydrate degradation; glycolysis; pyruvate from D-glyceraldehyde 3-phosphate: step 2/5. This Mycobacterium avium (strain 104) protein is Phosphoglycerate kinase.